A 123-amino-acid chain; its full sequence is Small ribosomal subunit protein uS12cz/uS12cy (123 aa).

It belongs to the universal ribosomal protein uS12 family. In terms of assembly, part of the 30S ribosomal subunit.

Its subcellular location is the plastid. The protein resides in the chloroplast. With S4 and S5 plays an important role in translational accuracy. Located at the interface of the 30S and 50S subunits. The polypeptide is Small ribosomal subunit protein uS12cz/uS12cy (rps12-A) (Platanus occidentalis (Sycamore)).